We begin with the raw amino-acid sequence, 494 residues long: Glycerol kinase (494 aa).

Threonine 13 contributes to the ADP binding site. Residues threonine 13, threonine 14, and serine 15 each coordinate ATP. Threonine 13 is a binding site for sn-glycerol 3-phosphate. Position 17 (arginine 17) interacts with ADP. The sn-glycerol 3-phosphate site is built by arginine 83, glutamate 84, tyrosine 135, and aspartate 244. The glycerol site is built by arginine 83, glutamate 84, tyrosine 135, aspartate 244, and glutamine 245. The ADP site is built by threonine 266 and glycine 309. ATP-binding residues include threonine 266, glycine 309, glutamine 313, and glycine 410. ADP is bound by residues glycine 410 and asparagine 414.

This sequence belongs to the FGGY kinase family.

It carries out the reaction glycerol + ATP = sn-glycerol 3-phosphate + ADP + H(+). The protein operates within polyol metabolism; glycerol degradation via glycerol kinase pathway; sn-glycerol 3-phosphate from glycerol: step 1/1. Its activity is regulated as follows. Inhibited by fructose 1,6-bisphosphate (FBP). In terms of biological role, key enzyme in the regulation of glycerol uptake and metabolism. Catalyzes the phosphorylation of glycerol to yield sn-glycerol 3-phosphate. The protein is Glycerol kinase of Shewanella oneidensis (strain ATCC 700550 / JCM 31522 / CIP 106686 / LMG 19005 / NCIMB 14063 / MR-1).